We begin with the raw amino-acid sequence, 909 residues long: Valine--tRNA ligase (909 aa).

The short motif at 52–62 is the 'HIGH' region element; the sequence is PNVTGVLHVGH. The 'KMSKS' region motif lies at 542–546; the sequence is KMSKS. Lys-545 lines the ATP pocket. A coiled-coil region spans residues 843-902; it reads IDIDQLKKRFEKELEKNEQNASKIDSKLKNENFVKNAPPEVIEGEKEKHAEFLRRIEKLK.

The protein belongs to the class-I aminoacyl-tRNA synthetase family. ValS type 1 subfamily. As to quaternary structure, monomer.

It is found in the cytoplasm. The enzyme catalyses tRNA(Val) + L-valine + ATP = L-valyl-tRNA(Val) + AMP + diphosphate. Its function is as follows. Catalyzes the attachment of valine to tRNA(Val). As ValRS can inadvertently accommodate and process structurally similar amino acids such as threonine, to avoid such errors, it has a 'posttransfer' editing activity that hydrolyzes mischarged Thr-tRNA(Val) in a tRNA-dependent manner. The sequence is that of Valine--tRNA ligase from Treponema denticola (strain ATCC 35405 / DSM 14222 / CIP 103919 / JCM 8153 / KCTC 15104).